Reading from the N-terminus, the 281-residue chain is Probable endonuclease 4 (281 aa).

Residues histidine 69, histidine 109, glutamate 145, aspartate 179, histidine 182, histidine 216, aspartate 229, histidine 231, and glutamate 261 each contribute to the Zn(2+) site.

It belongs to the AP endonuclease 2 family. Zn(2+) is required as a cofactor.

The catalysed reaction is Endonucleolytic cleavage to 5'-phosphooligonucleotide end-products.. Functionally, endonuclease IV plays a role in DNA repair. It cleaves phosphodiester bonds at apurinic or apyrimidinic (AP) sites, generating a 3'-hydroxyl group and a 5'-terminal sugar phosphate. The chain is Probable endonuclease 4 from Aeromonas hydrophila subsp. hydrophila (strain ATCC 7966 / DSM 30187 / BCRC 13018 / CCUG 14551 / JCM 1027 / KCTC 2358 / NCIMB 9240 / NCTC 8049).